Consider the following 162-residue polypeptide: Ribosome maturation factor RimM (162 aa).

Residues 90 to 161 enclose the PRC barrel domain; that stretch reads EDCYYEADIV…KIIIKPLEVW (72 aa).

It belongs to the RimM family. As to quaternary structure, binds ribosomal protein uS19.

Its subcellular location is the cytoplasm. An accessory protein needed during the final step in the assembly of 30S ribosomal subunit, possibly for assembly of the head region. Essential for efficient processing of 16S rRNA. May be needed both before and after RbfA during the maturation of 16S rRNA. It has affinity for free ribosomal 30S subunits but not for 70S ribosomes. The polypeptide is Ribosome maturation factor RimM (Clostridium novyi (strain NT)).